The sequence spans 140 residues: Cytochrome c-type biogenesis protein CcmE (140 aa).

At 1 to 7 the chain is on the cytoplasmic side; it reads MTKRQNR. The helical; Signal-anchor for type II membrane protein transmembrane segment at 8–28 threads the bilayer; sequence MVLVALLVIGVSLAGYLGLKA. Residues 29–140 are Periplasmic-facing; the sequence is FNENLLYFLS…DALEKAKNKQ (112 aa). Heme is bound by residues histidine 120 and tyrosine 124.

This sequence belongs to the CcmE/CycJ family.

The protein localises to the cell inner membrane. In terms of biological role, heme chaperone required for the biogenesis of c-type cytochromes. Transiently binds heme delivered by CcmC and transfers the heme to apo-cytochromes in a process facilitated by CcmF and CcmH. The polypeptide is Cytochrome c-type biogenesis protein CcmE (Vesicomyosocius okutanii subsp. Calyptogena okutanii (strain HA)).